We begin with the raw amino-acid sequence, 451 residues long: Glutamyl-tRNA reductase (451 aa).

Residues 49 to 52 (TCNR), Ser-109, 114 to 116 (EQQ), and Gln-120 contribute to the substrate site. The active-site Nucleophile is Cys-50. 190–195 (GAGAMG) serves as a coordination point for NADP(+).

It belongs to the glutamyl-tRNA reductase family. As to quaternary structure, homodimer.

The enzyme catalyses (S)-4-amino-5-oxopentanoate + tRNA(Glu) + NADP(+) = L-glutamyl-tRNA(Glu) + NADPH + H(+). The protein operates within porphyrin-containing compound metabolism; protoporphyrin-IX biosynthesis; 5-aminolevulinate from L-glutamyl-tRNA(Glu): step 1/2. In terms of biological role, catalyzes the NADPH-dependent reduction of glutamyl-tRNA(Glu) to glutamate 1-semialdehyde (GSA). The polypeptide is Glutamyl-tRNA reductase (Mycolicibacterium smegmatis (strain ATCC 700084 / mc(2)155) (Mycobacterium smegmatis)).